A 517-amino-acid polypeptide reads, in one-letter code: Putative lipase ATG15 (517 aa).

Over 1-6 (MRASTH) the chain is Cytoplasmic. The chain crosses the membrane as a helical; Signal-anchor for type II membrane protein span at residues 7-27 (SWLLLVVVLSLSSFTVNAVIL). The Lumenal segment spans residues 28–517 (EGLIPPRSHL…TNWHFTDETL (490 aa)). N-linked (GlcNAc...) asparagine glycosylation is found at Asn187, Asn221, and Asn303. Ser319 serves as the catalytic Charge relay system. The tract at residues 466–499 (GWRWPWHRGDSADDDGDSDEDTDEDDKLAVPKAR) is disordered. Acidic residues predominate over residues 477–491 (ADDDGDSDEDTDEDD).

This sequence belongs to the AB hydrolase superfamily. Lipase family. In terms of assembly, binds to both phosphatidylinositol (PI) and phosphatidylinositol 3,5-bisphosphate (PIP2).

Its subcellular location is the endosome. The protein resides in the multivesicular body membrane. It localises to the prevacuolar compartment membrane. It carries out the reaction a triacylglycerol + H2O = a diacylglycerol + a fatty acid + H(+). Its function is as follows. Lipase which is essential for lysis of subvacuolar cytoplasm to vacuole targeted bodies and intravacuolar autophagic bodies. Involved in the lysis of intravacuolar multivesicular body (MVB) vesicles. The intravacuolar membrane disintegration by ATG15 is critical to life span extension. This chain is Putative lipase ATG15 (ATG15), found in Mycosarcoma maydis (Corn smut fungus).